A 681-amino-acid polypeptide reads, in one-letter code: MIDRYKHQQLRIGSVSPQQISAWATKILPNGEIVGEVTKPYTFHYKTNKPEKDGLFCERIFGPIKSGICACGNYRVIGDEKEDPKFCEQCGVEFVDSRIRRYQMGYIKLACPVTHVWYLKRLPSYIANLLDKPLKELEGLVYCDFSFARPITKKPTFLRLRGLFEYEIQSWKYSIPLFFTTQGFDTFRNREISTGAGAIREQLADLDLRIIIENSLVEWEELGEEGHTGNEWEDRKVGRRKDFLVRRVELAKHFIRTNIEPEWMVLCLLPVLPPELRPIIQIDGGKLMSSDINELYRRVIYRNNTLTDLLTTSRSTPVELVMCQEKLVQEAVDTLLDNGIRGQPMRDGHNKVYKSFSDVIEGKEGRFRETLLGKRVDYSGRSVIVVGPSLSLHRCGLPREIAIELFQTFVIRGLIRQHLASNIGVAKSQIREKEPIVWEILQEVMQGHPVLLNRAPTLHRLGIQAFQPVLVAGRAICLHPLVCKGFNADFDGDQMAVHVPLSLEAQVEARLLMFSHMNLLSPAIGDPISVPTQDMLIGLYVLTSGNPRGICVNRYNPCNRINYQNKKRSDNSHYKYTKEPFFSNSYDAIGAYRQKRINLDSPLWLRWRLDQRVIASRETPIEVHYESLGTFYEIYGHYLIVRSLKKQILFIYIRTTVGHIALYREIEEAIQGFSRAYSYGT.

Zn(2+) contacts are provided by Cys69, Cys71, Cys87, and Cys90. Residues Asp489, Asp491, and Asp493 each coordinate Mg(2+).

It belongs to the RNA polymerase beta' chain family. RpoC1 subfamily. As to quaternary structure, in plastids the minimal PEP RNA polymerase catalytic core is composed of four subunits: alpha, beta, beta', and beta''. When a (nuclear-encoded) sigma factor is associated with the core the holoenzyme is formed, which can initiate transcription. Requires Mg(2+) as cofactor. Zn(2+) serves as cofactor.

The protein localises to the plastid. Its subcellular location is the chloroplast. It catalyses the reaction RNA(n) + a ribonucleoside 5'-triphosphate = RNA(n+1) + diphosphate. Functionally, DNA-dependent RNA polymerase catalyzes the transcription of DNA into RNA using the four ribonucleoside triphosphates as substrates. In Nicotiana tomentosiformis (Tobacco), this protein is DNA-directed RNA polymerase subunit beta'.